Consider the following 402-residue polypeptide: Acetate kinase (402 aa).

N7 serves as a coordination point for Mg(2+). K14 serves as a coordination point for ATP. Substrate is bound at residue R95. Residue D152 is the Proton donor/acceptor of the active site. Residues H212–G216, D286–R288, and G334–N338 each bind ATP. Residue E388 participates in Mg(2+) binding.

This sequence belongs to the acetokinase family. As to quaternary structure, homodimer. Mg(2+) is required as a cofactor. The cofactor is Mn(2+).

The protein resides in the cytoplasm. It carries out the reaction acetate + ATP = acetyl phosphate + ADP. It functions in the pathway metabolic intermediate biosynthesis; acetyl-CoA biosynthesis; acetyl-CoA from acetate: step 1/2. In terms of biological role, catalyzes the formation of acetyl phosphate from acetate and ATP. Can also catalyze the reverse reaction. In Oleidesulfovibrio alaskensis (strain ATCC BAA-1058 / DSM 17464 / G20) (Desulfovibrio alaskensis), this protein is Acetate kinase.